We begin with the raw amino-acid sequence, 84 residues long: Cytochrome b559 subunit alpha (84 aa).

Residues 22–36 (VIHSITIPSLFVAGW) form a helical membrane-spanning segment. His-24 lines the heme pocket.

The protein belongs to the PsbE/PsbF family. In terms of assembly, heterodimer of an alpha subunit and a beta subunit. PSII is composed of 1 copy each of membrane proteins PsbA, PsbB, PsbC, PsbD, PsbE, PsbF, PsbH, PsbI, PsbJ, PsbK, PsbL, PsbM, PsbT, PsbX, PsbY, PsbZ, Psb30/Ycf12, at least 3 peripheral proteins of the oxygen-evolving complex and a large number of cofactors. It forms dimeric complexes. Requires heme b as cofactor.

It is found in the plastid. The protein localises to the chloroplast thylakoid membrane. In terms of biological role, this b-type cytochrome is tightly associated with the reaction center of photosystem II (PSII). PSII is a light-driven water:plastoquinone oxidoreductase that uses light energy to abstract electrons from H(2)O, generating O(2) and a proton gradient subsequently used for ATP formation. It consists of a core antenna complex that captures photons, and an electron transfer chain that converts photonic excitation into a charge separation. The protein is Cytochrome b559 subunit alpha of Gracilaria tenuistipitata var. liui (Red alga).